Consider the following 514-residue polypeptide: MQISSSEICELISKKIAKFDIISSMHNEGRVISVSDGIIQIYGLSDVMQGEMLSLPGDKYAIALNLEKNVVGAIVMGEYTHITEGTKIISTGRIFEIPVGSKFLGRVINALGVPIDGKGRIQEEKFLPVEINAPGVIDRQKISEPLQTGYKSIDAMVPIGKGQRELIIGDRQTGKTSLAIDTIINQRNTKIKCIYVAIGQKFSTIVNLVRQLEDNQALNHTIVIVASASESAALQYLVPYSGCSLGEFFRDQGKDALIVYDDLSKHAIAYRQISLLLRRPPGREAFPGDIFYLHARLLERACRVNSNYLKNILGTVNKFSTGSLTALPIIETQDGDVSSFIPTNVISITDGQIFLESNLFNSGIRPAINPGISVSRVGGAAQCQIIRKLSSGIRTSLAQYQELIAFSQFSSELDEITRNQLIHGKKLIEILKQKQYHPMSIAEQAIILFAAENNFLNDVSVEQIIKFEKMLLLFFNTNNSELVLSINNYKRINDVVENQLSDVINAFKLTKCWS.

Glycine 169–threonine 176 contacts ATP.

Belongs to the ATPase alpha/beta chains family. As to quaternary structure, F-type ATPases have 2 components, CF(1) - the catalytic core - and CF(0) - the membrane proton channel. CF(1) has five subunits: alpha(3), beta(3), gamma(1), delta(1), epsilon(1). CF(0) has three main subunits: a(1), b(2) and c(9-12). The alpha and beta chains form an alternating ring which encloses part of the gamma chain. CF(1) is attached to CF(0) by a central stalk formed by the gamma and epsilon chains, while a peripheral stalk is formed by the delta and b chains.

The protein resides in the cell membrane. The catalysed reaction is ATP + H2O + 4 H(+)(in) = ADP + phosphate + 5 H(+)(out). Its function is as follows. Produces ATP from ADP in the presence of a proton gradient across the membrane. The alpha chain is a regulatory subunit. This chain is ATP synthase subunit alpha, found in Buchnera aphidicola subsp. Baizongia pistaciae (strain Bp).